The primary structure comprises 352 residues: MVFRIASSPYTHNQRQTSRIMLLVLLAAIPGIATQLWFFGWGTLVQIILAVISALSAEALVLKLRNQPIAAILKDNSALLTGLLLAVSIPPLAPWWMVVLGTVFAVIIAKQLYGGLGQNPFNPAMIGYVVLLISFPVQMTNWLPPYEIAATVPGMADTLQVIFTGHTTSGGDMSTLRMGIDGISQATPLDTLKTSLHSGRSVEQIMQYPIFSGMLAGAGWQWVNLAWLAGGVWLLAIKVIRWHIPVSFLVSLALCATLGWLFAPESLASPQIHMLSGATMLGAFFILTDPVTASTTNRGRLIFGALAGVLVWLIRSFGGYPDGVAFAVLLANITVPLIDYYTRPRVYGHRKG.

The next 5 membrane-spanning stretches (helical) occupy residues 20-40 (IMLLVLLAAIPGIATQLWFFG), 42-62 (GTLVQIILAVISALSAEALVL), 68-88 (PIAAILKDNSALLTGLLLAVS), 89-109 (IPPLAPWWMVVLGTVFAVIIA), and 123-143 (PAMIGYVVLLISFPVQMTNWL). Thr-187 carries the FMN phosphoryl threonine modification. Helical transmembrane passes span 217–237 (GAGWQWVNLAWLAGGVWLLAI), 244–264 (IPVSFLVSLALCATLGWLFAP), 267–287 (LASPQIHMLSGATMLGAFFIL), 301–321 (LIFGALAGVLVWLIRSFGGYP), and 322–342 (DGVAFAVLLANITVPLIDYYT).

Belongs to the NqrB/RnfD family. As to quaternary structure, the complex is composed of six subunits: RsxA, RsxB, RsxC, RsxD, RsxE and RsxG. The cofactor is FMN.

It localises to the cell inner membrane. Part of a membrane-bound complex that couples electron transfer with translocation of ions across the membrane. Required to maintain the reduced state of SoxR. The protein is Ion-translocating oxidoreductase complex subunit D of Escherichia fergusonii (strain ATCC 35469 / DSM 13698 / CCUG 18766 / IAM 14443 / JCM 21226 / LMG 7866 / NBRC 102419 / NCTC 12128 / CDC 0568-73).